A 42-amino-acid polypeptide reads, in one-letter code: Large ribosomal subunit protein bL36 (42 aa).

The protein belongs to the bacterial ribosomal protein bL36 family.

The sequence is that of Large ribosomal subunit protein bL36 from Wolbachia sp. subsp. Brugia malayi (strain TRS).